A 92-amino-acid chain; its full sequence is MPRSLKKGPFIDLHLLKKVEKAMEAGDKKPIKTWSRRSMIIPNMIGMTIAVHNGRQHVPVFVTDEMIGHKLGEFSPTRTYRGHAADKKAKKR.

Belongs to the universal ribosomal protein uS19 family.

Functionally, protein S19 forms a complex with S13 that binds strongly to the 16S ribosomal RNA. In Shewanella halifaxensis (strain HAW-EB4), this protein is Small ribosomal subunit protein uS19.